A 208-amino-acid chain; its full sequence is Outer-membrane lipoprotein carrier protein (208 aa).

Residues 1–24 (MRMNIVQKILSATCFALLPLLAHA) form the signal peptide.

It belongs to the LolA family. In terms of assembly, monomer.

It localises to the periplasm. Functionally, participates in the translocation of lipoproteins from the inner membrane to the outer membrane. Only forms a complex with a lipoprotein if the residue after the N-terminal Cys is not an aspartate (The Asp acts as a targeting signal to indicate that the lipoprotein should stay in the inner membrane). This chain is Outer-membrane lipoprotein carrier protein, found in Dechloromonas aromatica (strain RCB).